A 276-amino-acid chain; its full sequence is NH(3)-dependent NAD(+) synthetase (276 aa).

An ATP-binding site is contributed by 43–50; that stretch reads GISGGVDS. Asp49 is a Mg(2+) binding site. Deamido-NAD(+) is bound at residue Arg146. ATP is bound at residue Thr166. Glu171 contributes to the Mg(2+) binding site. Deamido-NAD(+)-binding residues include Lys179 and Asp186. Residues Lys195 and Thr217 each contribute to the ATP site. 266-267 contributes to the deamido-NAD(+) binding site; sequence HK.

It belongs to the NAD synthetase family. Homodimer.

The catalysed reaction is deamido-NAD(+) + NH4(+) + ATP = AMP + diphosphate + NAD(+) + H(+). It participates in cofactor biosynthesis; NAD(+) biosynthesis; NAD(+) from deamido-NAD(+) (ammonia route): step 1/1. Catalyzes the ATP-dependent amidation of deamido-NAD to form NAD. Uses ammonia as a nitrogen source. This is NH(3)-dependent NAD(+) synthetase from Vibrio vulnificus (strain YJ016).